We begin with the raw amino-acid sequence, 95 residues long: Aspartyl/glutamyl-tRNA(Asn/Gln) amidotransferase subunit C (95 aa).

It belongs to the GatC family. As to quaternary structure, heterotrimer of A, B and C subunits.

It carries out the reaction L-glutamyl-tRNA(Gln) + L-glutamine + ATP + H2O = L-glutaminyl-tRNA(Gln) + L-glutamate + ADP + phosphate + H(+). The enzyme catalyses L-aspartyl-tRNA(Asn) + L-glutamine + ATP + H2O = L-asparaginyl-tRNA(Asn) + L-glutamate + ADP + phosphate + 2 H(+). Allows the formation of correctly charged Asn-tRNA(Asn) or Gln-tRNA(Gln) through the transamidation of misacylated Asp-tRNA(Asn) or Glu-tRNA(Gln) in organisms which lack either or both of asparaginyl-tRNA or glutaminyl-tRNA synthetases. The reaction takes place in the presence of glutamine and ATP through an activated phospho-Asp-tRNA(Asn) or phospho-Glu-tRNA(Gln). The protein is Aspartyl/glutamyl-tRNA(Asn/Gln) amidotransferase subunit C of Cereibacter sphaeroides (strain ATCC 17023 / DSM 158 / JCM 6121 / CCUG 31486 / LMG 2827 / NBRC 12203 / NCIMB 8253 / ATH 2.4.1.) (Rhodobacter sphaeroides).